We begin with the raw amino-acid sequence, 353 residues long: uncharacterized protein (353 aa).

This is an uncharacterized protein from Methanocaldococcus jannaschii (strain ATCC 43067 / DSM 2661 / JAL-1 / JCM 10045 / NBRC 100440) (Methanococcus jannaschii).